A 463-amino-acid chain; its full sequence is Chromosomal replication initiator protein DnaA (463 aa).

The interval 1 to 83 (MSLSLWQQCL…LRFEVGSKPI (83 aa)) is domain I, interacts with DnaA modulators. The domain II stretch occupies residues 83 to 126 (IVPVAVSSAASSGASVPPAAVRASSLARPSWERVTAQPELSYRS). A domain III, AAA+ region region spans residues 127–343 (NVNPKHTFDN…GALNRVIANA (217 aa)). Residues Gly-171, Gly-173, Lys-174, and Thr-175 each coordinate ATP. The domain IV, binds dsDNA stretch occupies residues 344 to 463 (NFTGRAITID…FSNLIRTLSS (120 aa)).

It belongs to the DnaA family. Oligomerizes as a right-handed, spiral filament on DNA at oriC.

It localises to the cytoplasm. Its function is as follows. Plays an essential role in the initiation and regulation of chromosomal replication. ATP-DnaA binds to the origin of replication (oriC) to initiate formation of the DNA replication initiation complex once per cell cycle. Binds the DnaA box (a 9 base pair repeat at the origin) and separates the double-stranded (ds)DNA. Forms a right-handed helical filament on oriC DNA; dsDNA binds to the exterior of the filament while single-stranded (ss)DNA is stabiized in the filament's interior. The ATP-DnaA-oriC complex binds and stabilizes one strand of the AT-rich DNA unwinding element (DUE), permitting loading of DNA polymerase. After initiation quickly degrades to an ADP-DnaA complex that is not apt for DNA replication. Binds acidic phospholipids. The sequence is that of Chromosomal replication initiator protein DnaA from Edwardsiella ictaluri (strain 93-146).